Reading from the N-terminus, the 456-residue chain is E3 ubiquitin-protein ligase PUB24 (456 aa).

The region spanning 9–83 (EIPNYFICPI…QHWCVENETR (75 aa)) is the U-box domain.

Post-translationally, auto-ubiquitinated.

The enzyme catalyses S-ubiquitinyl-[E2 ubiquitin-conjugating enzyme]-L-cysteine + [acceptor protein]-L-lysine = [E2 ubiquitin-conjugating enzyme]-L-cysteine + N(6)-ubiquitinyl-[acceptor protein]-L-lysine.. The protein operates within protein modification; protein ubiquitination. Its function is as follows. E3 ubiquitin-protein ligase that acts as a negative regulator of the immunity triggered by the pathogen-associated molecular patterns (PAMPs), in association with PUB22 and PUB23. In Arabidopsis thaliana (Mouse-ear cress), this protein is E3 ubiquitin-protein ligase PUB24 (PUB24).